The sequence spans 1157 residues: MTLHAYLGRAGTGKSTKMLTEIKQKMKADPLGDPIILIAPTQSTFQLEQAFVNDPELNGSLRTEVLHFERLSHRIFQEVGSYSEQKLSKAATEMMIYNIVQEQQKYLKLYQSQAKYYGFSEKLTEQIQDFKKYAVTPEHLEHFIADKNMQTRTKNKLEDIALIYREFEQRIQNEFITGEDSLQYFIDCMPKSEWLKRADIYIDGFHNFSTIEYLIIKGLIKYAKSVTIILTTDGNHDQFSLFRKPSEVLRHIEEIANELNISIERQYFNQLYRFNNQDLKHLEQEFDVLQINRVACQGHINILESATMREEINEIARRIIVDIRDKQLRYQDIAILYRDESYAYLFDSILPLYNIPYNIDTKRSMTHHPVMEMIRSLIEVIQSNWQVNPMLRLLKTDVLTASYLKSAYLVDLLENFVLERGIYGKRWLDDELFNVEHFSKMGRKAHKLTEDERNTFEQVVKLKKDVIDKILHFEKQMSQAETVKDFATAFYESMEYFELPNQLMTERDELDLNGNHEKAEEIDQIWNGLIQILDDLVLVFGDEPMSMERFLEVFDIGLEQLEFVMIPQTLDQVSIGTMDLAKVDNKQHVYLVGMNDGTMPQPVTASSLITDEEKKYFEQQANVELSPTSDILQMDEAFVCYVAMTRAKGDVTFSYSLMGSSGDDKEISPFLNQIQSLFNQLEITNIPQYHEVNPLSLMQHAKQTKITLFEALRAWLDDEIVADSWLDAYQVIRDSDHLNQGLDYLMSALTFDNETVKLGETLSKDLYGKEINASVSRFEGYQQCPFKHYASHGLKLNERTKYELQNFDLGDIFHSVLKYISERINGDFKQLDLKKIRQLTNEALEEILPKVQFNLLNSSAYYRYLSRRIGAIVETTLSALKYQGTYSKFMPKHFETSFRRKPRTNDELIAQTLTTTQGIPINIRGQIDRIDTYTKNDTSFVNIIDYKSSEGSATLDLTKVYYGMQMQMMTYMDIVLQNKQRLGLTDIVKPGGLLYFHVHEPRIKFKSWSDIDEDKLEQDLIKKFKLSGLVNADQTVIDALDIRLEPKFTSDIVPVGLNKDGSLSKRGSQVADEATIYKFIQHNKENFIETASNIMDGHTEVAPLKYKQKLPCAFCSYQSVCHVDGMIDSKRYRTVDETINPIEAIQNININDEFGGE.

The 275-residue stretch at 1–275 (MTLHAYLGRA…QYFNQLYRFN (275 aa)) folds into the UvrD-like helicase ATP-binding domain. An ATP-binding site is contributed by 8–15 (GRAGTGKS). The region spanning 269 to 583 (NQLYRFNNQD…SIGTMDLAKV (315 aa)) is the UvrD-like helicase C-terminal domain. [4Fe-4S] cluster-binding residues include Cys784, Cys1112, Cys1115, and Cys1121.

This sequence belongs to the helicase family. AddB/RexB type 1 subfamily. In terms of assembly, heterodimer of AddA and AddB. Mg(2+) is required as a cofactor. Requires [4Fe-4S] cluster as cofactor.

Functionally, the heterodimer acts as both an ATP-dependent DNA helicase and an ATP-dependent, dual-direction single-stranded exonuclease. Recognizes the chi site generating a DNA molecule suitable for the initiation of homologous recombination. The AddB subunit has 5' -&gt; 3' nuclease activity but not helicase activity. This Staphylococcus aureus (strain JH9) protein is ATP-dependent helicase/deoxyribonuclease subunit B.